A 468-amino-acid chain; its full sequence is UDP-N-acetylmuramate--L-alanine ligase (468 aa).

121–127 (GSHGKTT) provides a ligand contact to ATP.

Belongs to the MurCDEF family.

It localises to the cytoplasm. The enzyme catalyses UDP-N-acetyl-alpha-D-muramate + L-alanine + ATP = UDP-N-acetyl-alpha-D-muramoyl-L-alanine + ADP + phosphate + H(+). It participates in cell wall biogenesis; peptidoglycan biosynthesis. Cell wall formation. This Borreliella afzelii (strain PKo) (Borrelia afzelii) protein is UDP-N-acetylmuramate--L-alanine ligase.